The sequence spans 671 residues: Kinesin-like protein KIF2C (671 aa).

Residues 1 to 200 are globular; that stretch reads MIDIDDVAAI…CNPLTVTDPI (200 aa). The tract at residues 37-58 is disordered; it reads QKRKSVNSKIPGPKEGLRSRST. Position 41 is a phosphoserine; by AURKB (Ser-41). A Microtubule tip localization signal motif is present at residues 44–47; sequence SKIP. 7 positions are modified to phosphoserine: Ser-55, Ser-57, Ser-61, Ser-112, Ser-121, Ser-133, and Ser-138. The interval 115–138 is disordered; sequence AEEQAHSTRSTSSANPGNSVRRKS. Residues 121–132 show a composition bias toward polar residues; it reads STRSTSSANPGN. The interval 153-184 is negative regulator of microtubule-binding; sequence EKRAQNSEIRIKRAQEYDNSFPNWEFARMIKE. Residues 204–534 form the Kinesin motor domain; it reads RICVCVRKRP…LRYADRVKEL (331 aa). Residues Arg-210 and 294-301 contribute to the ATP site; that span reads GQTGSGKT. Residue Ser-465 is modified to Phosphoserine. Positions 533–568 are disordered; sequence ELSPHSGPSGEQAVQMETEEMDASSHGASLTGNEEE. A coiled-coil region spans residues 566–601; it reads EEEELSSQMSSFNEAMTQIRELEERAMEELREIIQQ. A Phosphoserine modification is found at Ser-576.

It belongs to the TRAFAC class myosin-kinesin ATPase superfamily. Kinesin family. MCAK/KIF2 subfamily. In terms of assembly, interacts with CENPH. Interacts with MTUS2/TIP150; the interaction is direct. Interacts with MAPRE1; the interaction is direct, regulated by phosphorylation and is probably required for targeting to growing microtubule plus ends. Interacts with KIF18B at microtubule tips; this interaction increases the affinity of both partners for microtubule plus ends and is required for robust microtubule depolymerization. Phosphorylation by AURKA or AURKB strongly reduces KIF18B-binding. Post-translationally, phosphorylation by AURKB, regulates association with centromeres and kinetochores and the microtubule depolymerization activity. Ubiquitinated. Testis. Localized to the meiotically active cells of the seminiferous epithelia in the testis.

It localises to the cytoplasm. It is found in the cytoskeleton. The protein resides in the nucleus. The protein localises to the chromosome. Its subcellular location is the centromere. It localises to the kinetochore. Functionally, in complex with KIF18B, constitutes the major microtubule plus-end depolymerizing activity in mitotic cells. Regulates the turnover of microtubules at the kinetochore and functions in chromosome segregation during mitosis. Plays a role in chromosome congression and is required for the lateral to end-on conversion of the chromosome-microtubule attachment. This is Kinesin-like protein KIF2C (Kif2c) from Rattus norvegicus (Rat).